The chain runs to 103 residues: ATP synthase F(0) complex subunit g, mitochondrial (103 aa).

Ala2 bears the N-acetylalanine mark. 4 positions are modified to N6-acetyllysine: Lys11, Lys24, Lys35, and Lys54.

The protein belongs to the ATPase g subunit family. Component of the ATP synthase complex composed at least of ATP5F1A/subunit alpha, ATP5F1B/subunit beta, ATP5MC1/subunit c (homooctomer), MT-ATP6/subunit a, MT-ATP8/subunit 8, ATP5ME/subunit e, ATP5MF/subunit f, ATP5MG/subunit g, ATP5MK/subunit k, ATP5MJ/subunit j, ATP5F1C/subunit gamma, ATP5F1D/subunit delta, ATP5F1E/subunit epsilon, ATP5PF/subunit F6, ATP5PB/subunit b, ATP5PD/subunit d, ATP5PO/subunit OSCP. ATP synthase complex consists of a soluble F(1) head domain (subunits alpha(3) and beta(3)) - the catalytic core - and a membrane F(0) domain - the membrane proton channel (subunits c, a, 8, e, f, g, k and j). These two domains are linked by a central stalk (subunits gamma, delta, and epsilon) rotating inside the F1 region and a stationary peripheral stalk (subunits F6, b, d, and OSCP).

The protein resides in the mitochondrion. It localises to the mitochondrion inner membrane. In terms of biological role, subunit g, of the mitochondrial membrane ATP synthase complex (F(1)F(0) ATP synthase or Complex V) that produces ATP from ADP in the presence of a proton gradient across the membrane which is generated by electron transport complexes of the respiratory chain. ATP synthase complex consist of a soluble F(1) head domain - the catalytic core - and a membrane F(1) domain - the membrane proton channel. These two domains are linked by a central stalk rotating inside the F(1) region and a stationary peripheral stalk. During catalysis, ATP synthesis in the catalytic domain of F(1) is coupled via a rotary mechanism of the central stalk subunits to proton translocation. In vivo, can only synthesize ATP although its ATP hydrolase activity can be activated artificially in vitro. Part of the complex F(0) domain. The polypeptide is ATP synthase F(0) complex subunit g, mitochondrial (Homo sapiens (Human)).